Here is a 670-residue protein sequence, read N- to C-terminus: NAD-dependent histone deacetylase SIR2 (670 aa).

Disordered stretches follow at residues 1-157 and 235-263; these read MTEY…EHPI and DNDD…PSPS. Residues 45 to 68 are compositionally biased toward acidic residues; that stretch reads NEDVDVDADADVDADADADADAEE. Over residues 69 to 81 the composition is skewed to basic and acidic residues; sequence DAQKDILEETKAD. A compositionally biased stretch (acidic residues) spans 82-92; that stretch reads ELDEVVDEYEE. Over residues 96–119 the composition is skewed to polar residues; that stretch reads SSNFNGTASDHVGITSSNTGSTAL. The span at 120–142 shows a compositional bias: low complexity; the sequence is AASSADTNSGSGNGTGTMATNGT. The segment covering 239 to 261 has biased composition (polar residues); the sequence is SLPQKNSSETKNVSDTYTATYPS. The 291-residue stretch at 293–583 folds into the Deacetylase sirtuin-type domain; sequence RLTNFHTIDD…ALVAQKCGWD (291 aa). NAD(+) contacts are provided by residues 318–337 and 400–403; these read GAGI…EGFY and QNID. Catalysis depends on His420, which acts as the Proton acceptor. The Zn(2+) site is built by Cys428, Cys431, Cys452, and Cys455. NAD(+) contacts are provided by residues 527–529, 552–554, and Cys569; these read GTS and NKD. Positions 617 to 670 are disordered; it reads AELEAEEEKHLPLQQSTAALTPPVSLSADSPGRSSSSSPQPPTQTDIANNQTST. Low complexity predominate over residues 641–654; the sequence is SLSADSPGRSSSSS. A compositionally biased stretch (polar residues) spans 659-670; that stretch reads TQTDIANNQTST.

The protein belongs to the sirtuin family. Class I subfamily. It depends on Zn(2+) as a cofactor.

The protein resides in the nucleus. The enzyme catalyses N(6)-acetyl-L-lysyl-[protein] + NAD(+) + H2O = 2''-O-acetyl-ADP-D-ribose + nicotinamide + L-lysyl-[protein]. NAD-dependent deacetylase, which asts as a key regulator of gene expression believed to help form modified chromatin structures on the genes it regulates. It is involved in telomeric silencing and in hm mating type loci silencing. The protein is NAD-dependent histone deacetylase SIR2 (SIR2) of Kluyveromyces lactis (strain ATCC 8585 / CBS 2359 / DSM 70799 / NBRC 1267 / NRRL Y-1140 / WM37) (Yeast).